The sequence spans 370 residues: MRVIFSGGGTGGHIYPIMALIERLKERKLVTNDEILFVGTDRGLESKIVPAAGVPFKTLKIKGFDRKHPLKNFETIELFIKATKEAKQIIKNFKPDVVVGTGGYVSGAIVYEAAKMHVPTIIHESNSVVGLANKFLAHYVDKICYTFDDAAKQFSEKKKLVKTGNPRSQQVLGLNKENIDIAKKWDLNPNMPTVLIFGGSRGALAINQIVEKSLSELETKPYQVIWATGQLYYGDVKKKLAGKEVNSNIKIVPYIDNMPGLLPQMTCVVARSGATSLAEFTALGVPVILIPSPNVTHNHQMKNALDMEKAGAALVIAENDLNPNNFVSSIDHILLDTNYAKKMSEASKKLGVPDASDQVISVMESLIKNK.

Residues 10 to 12, Asn126, Ser200, Ile255, and Gln300 each bind UDP-N-acetyl-alpha-D-glucosamine; that span reads TGG.

This sequence belongs to the glycosyltransferase 28 family. MurG subfamily.

It is found in the cell membrane. It catalyses the reaction Mur2Ac(oyl-L-Ala-gamma-D-Glu-L-Lys-D-Ala-D-Ala)-di-trans,octa-cis-undecaprenyl diphosphate + UDP-N-acetyl-alpha-D-glucosamine = beta-D-GlcNAc-(1-&gt;4)-Mur2Ac(oyl-L-Ala-gamma-D-Glu-L-Lys-D-Ala-D-Ala)-di-trans,octa-cis-undecaprenyl diphosphate + UDP + H(+). Its pathway is cell wall biogenesis; peptidoglycan biosynthesis. In terms of biological role, cell wall formation. Catalyzes the transfer of a GlcNAc subunit on undecaprenyl-pyrophosphoryl-MurNAc-pentapeptide (lipid intermediate I) to form undecaprenyl-pyrophosphoryl-MurNAc-(pentapeptide)GlcNAc (lipid intermediate II). The polypeptide is UDP-N-acetylglucosamine--N-acetylmuramyl-(pentapeptide) pyrophosphoryl-undecaprenol N-acetylglucosamine transferase (Lactobacillus johnsonii (strain CNCM I-12250 / La1 / NCC 533)).